The following is a 221-amino-acid chain: Thymidylate kinase (221 aa).

11-18 is a binding site for ATP; that stretch reads GPDGAGKT.

This sequence belongs to the thymidylate kinase family.

It carries out the reaction dTMP + ATP = dTDP + ADP. Its function is as follows. Phosphorylation of dTMP to form dTDP in both de novo and salvage pathways of dTTP synthesis. This chain is Thymidylate kinase, found in Lactiplantibacillus plantarum (strain ATCC BAA-793 / NCIMB 8826 / WCFS1) (Lactobacillus plantarum).